Consider the following 394-residue polypeptide: Potassium channel subfamily K member 3 (394 aa).

Topologically, residues 1 to 8 are cytoplasmic; that stretch reads MKRQNVRT. A helical transmembrane segment spans residues 9–29; the sequence is LALIVCTFTYLLVGAAVFDAL. N-linked (GlcNAc...) asparagine glycosylation is present at asparagine 53. An intramembrane region (pore-forming) is located at residues 78 to 101; the sequence is WRFAGSFYFAITVITTIGYGHAAP. K(+) contacts are provided by threonine 93, isoleucine 94, glycine 95, and tyrosine 96. The tract at residues 93 to 98 is selectivity filter 1; it reads TIGYGH. Residues 108 to 128 traverse the membrane as a helical segment; that stretch reads VFCMFYALLGIPLTLVMFQSL. The Cytoplasmic portion of the chain corresponds to 129 to 158; the sequence is GERINTLVRYLLHRAKKGLGMRRADVSMAN. The chain crosses the membrane as a helical span at residues 159–179; that stretch reads MVLIGFFSCISTLCIGAAAFS. An intramembrane region (pore-forming) is located at residues 184–207; it reads WTFFQAYYYCFITLTTIGFGDYVA. K(+)-binding residues include threonine 199, isoleucine 200, glycine 201, and phenylalanine 202. Residues 199 to 204 are selectivity filter 2; that stretch reads TIGFGD. The helical transmembrane segment at 223–243 threads the bilayer; the sequence is FSFVYILTGLTVIGAFLNLVV. The X-gate stretch occupies residues 243 to 248; that stretch reads VLRFMT. The Cytoplasmic segment spans residues 244 to 394; sequence LRFMTMNAED…RGLMKRRSSV (151 aa). Disordered regions lie at residues 266-286 and 338-357; these read RNGQ…DTAS and TCVE…SDTP. The span at 269-278 shows a compositional bias: gly residues; sequence QAGGGGGGGS.

The protein belongs to the two pore domain potassium channel (TC 1.A.1.8) family. As to quaternary structure, homodimer. Heterodimer with KCNK1. Heterodimer with KCNK9. As to expression, widespread expression in adult. Strongest expression in pancreas and placenta. Lower expression in brain, lung, prostate, heart, kidney, uterus, small intestine and colon.

The protein localises to the cell membrane. The enzyme catalyses K(+)(in) = K(+)(out). It carries out the reaction Na(+)(in) = Na(+)(out). Inhibited by external acidification, diacylglycerol and anandamide. Activated by halothane and isoflurane. In terms of biological role, k(+) channel that conducts voltage-dependent outward rectifying currents upon membrane depolarization. Voltage sensing is coupled to K(+) electrochemical gradient in an 'ion flux gating' mode where outward but not inward ion flow opens the gate. Changes ion selectivity and becomes permeable to Na(+) ions in response to extracellular acidification. Protonation of the pH sensor His-98 stabilizes C-type inactivation conformation likely converting the channel from outward K(+)-conducting, to inward Na(+)-conducting to nonconductive state. Homo- and heterodimerizes to form functional channels with distinct regulatory and gating properties. Allows K(+) currents with fast-gating kinetics important for the repolarization and hyperpolarization phases of action potentials. In cerebellar granule cells, heteromeric KCNK3:KCNK9 channel may hyperpolarize the resting membrane potential to limit intrinsic neuronal excitability, but once the action potential threshold is reached, it may support high-frequency action potential firing and increased neuronal excitability. Dispensable for central chemosensory respiration i.e. breathing controlled by brainstem CO2/pH, it rather conducts pH-sensitive currents and controls the firing rate of serotonergic raphe neurons involved in potentiation of the respiratory chemoreflex. Additionally, imparts chemosensitivity to type 1 cells in carotid bodies which respond to a decrease in arterial oxygen pressure or an increase in carbon dioxide pressure or pH to initiate adaptive changes in pulmonary ventilation. In adrenal gland, contributes to the maintenance of a hyperpolarized resting membrane potential of aldosterone-producing cells at zona glomerulosa and limits aldosterone release as part of a regulatory mechanism that controls arterial blood pressure and electrolyte homeostasis. In brown adipocytes, mediates K(+) efflux that counteracts norepinephrine-induced membrane depolarization, limits Ca(2+) efflux and downstream cAMP and PKA signaling, ultimately attenuating lipid oxidation and adaptive thermogenesis. In Homo sapiens (Human), this protein is Potassium channel subfamily K member 3.